Reading from the N-terminus, the 479-residue chain is Poly(A) polymerase catalytic subunit (479 aa).

Catalysis depends on residues D202 and D204. Positions 202, 204, and 253 each coordinate Ca(2+).

This sequence belongs to the poxviridae poly(A) polymerase catalytic subunit family. As to quaternary structure, heterodimer of a large (catalytic) subunit and a small (regulatory) subunit.

It catalyses the reaction RNA(n) + ATP = RNA(n)-3'-adenine ribonucleotide + diphosphate. Its function is as follows. Polymerase that creates the 3'-poly(A) tail of mRNA's. In Homo sapiens (Human), this protein is Poly(A) polymerase catalytic subunit (OPG063).